Consider the following 286-residue polypeptide: Protease HtpX (286 aa).

Helical transmembrane passes span 4 to 24 and 33 to 53; these read ILLF…ILSL and TGLL…SLFL. A Zn(2+)-binding site is contributed by His-139. Glu-140 is an active-site residue. Zn(2+) is bound at residue His-143. The next 2 helical transmembrane spans lie at 147-167 and 186-206; these read GDMV…IFVS and IYFL…SMIA. Residue Glu-214 coordinates Zn(2+).

This sequence belongs to the peptidase M48B family. It depends on Zn(2+) as a cofactor.

Its subcellular location is the cell inner membrane. This chain is Protease HtpX, found in Pasteurella multocida (strain Pm70).